The sequence spans 320 residues: Acetyl-coenzyme A carboxylase carboxyl transferase subunit alpha (320 aa).

Positions 42-295 constitute a CoA carboxyltransferase C-terminal domain; the sequence is IEEKAVQALN…GDAIAAAFAE (254 aa).

The protein belongs to the AccA family. Acetyl-CoA carboxylase is a heterohexamer composed of biotin carboxyl carrier protein (AccB), biotin carboxylase (AccC) and two subunits each of ACCase subunit alpha (AccA) and ACCase subunit beta (AccD).

It is found in the cytoplasm. It carries out the reaction N(6)-carboxybiotinyl-L-lysyl-[protein] + acetyl-CoA = N(6)-biotinyl-L-lysyl-[protein] + malonyl-CoA. The protein operates within lipid metabolism; malonyl-CoA biosynthesis; malonyl-CoA from acetyl-CoA: step 1/1. Its function is as follows. Component of the acetyl coenzyme A carboxylase (ACC) complex. First, biotin carboxylase catalyzes the carboxylation of biotin on its carrier protein (BCCP) and then the CO(2) group is transferred by the carboxyltransferase to acetyl-CoA to form malonyl-CoA. The sequence is that of Acetyl-coenzyme A carboxylase carboxyl transferase subunit alpha from Rhodopseudomonas palustris (strain HaA2).